The chain runs to 243 residues: Glutathione S-transferase omega-2 (243 aa).

Residues 22–101 (GLIRIYSMRF…YLDDAYPGRK (80 aa)) enclose the GST N-terminal domain. Residue Cys32 is the Nucleophile of the active site. Residues Lys59, Ile72, and 85 to 86 (ES) contribute to the glutathione site. The GST C-terminal domain occupies 106–231 (DPYERARQKM…IFQGFLNLYF (126 aa)).

This sequence belongs to the GST superfamily. Omega family. Expressed in a range of tissues, including the liver, kidney, skeletal muscle and prostate. Strongest expression in the testis.

It catalyses the reaction RX + glutathione = an S-substituted glutathione + a halide anion + H(+). It carries out the reaction L-dehydroascorbate + 2 glutathione = glutathione disulfide + L-ascorbate. The enzyme catalyses methylarsonate + 2 glutathione + H(+) = methylarsonous acid + glutathione disulfide + H2O. Exhibits glutathione-dependent thiol transferase activity. Has high dehydroascorbate reductase activity and may contribute to the recycling of ascorbic acid. Participates in the biotransformation of inorganic arsenic and reduces monomethylarsonic acid (MMA). This is Glutathione S-transferase omega-2 (GSTO2) from Homo sapiens (Human).